A 596-amino-acid polypeptide reads, in one-letter code: Jacalin-related lectin 46 (596 aa).

Positions 1-20 (MTERSEALGKDGNRRWDDKS) are disordered. 4 Jacalin-type lectin domains span residues 2 to 143 (TERS…YFTR), 146 to 291 (PTRI…YFTP), 294 to 439 (PTKS…HFYP), and 446 to 592 (AEKL…HVLP).

This sequence belongs to the jacalin lectin family.

The polypeptide is Jacalin-related lectin 46 (JAL46) (Arabidopsis thaliana (Mouse-ear cress)).